We begin with the raw amino-acid sequence, 163 residues long: CASP-like protein 1C2 (163 aa).

Over 1-6 the chain is Cytoplasmic; the sequence is MAKSNK. A helical membrane pass occupies residues 7 to 27; the sequence is IFTNTLRLLALAATVVAIVFM. Topologically, residues 28-52 are extracellular; it reads VTSHDSAQVLNLTFTAKYSNTPAFK. N-linked (GlcNAc...) asparagine glycosylation is present at Asn-38. The helical transmembrane segment at 53–73 threads the bilayer; sequence FLVIGEAIAGGYTVISILLSF. Residues 74 to 79 lie on the Cytoplasmic side of the membrane; it reads KGLFWR. A helical transmembrane segment spans residues 80 to 100; it reads LIVILDMVTTVLLTSSISAAL. The Extracellular portion of the chain corresponds to 101–128; sequence AIAQVGKKGNTHAGWLPICGQVPDFCDY. The helical transmembrane segment at 129–149 threads the bilayer; that stretch reads VTIALIAGFAAAIIYFVLLLC. Residues 150-163 are Cytoplasmic-facing; sequence SLYVVLSPIFVATP.

Belongs to the Casparian strip membrane proteins (CASP) family. Homodimer and heterodimers.

Its subcellular location is the cell membrane. This Populus trichocarpa (Western balsam poplar) protein is CASP-like protein 1C2.